A 517-amino-acid polypeptide reads, in one-letter code: Crotonobetaine/carnitine--CoA ligase (517 aa).

Belongs to the ATP-dependent AMP-binding enzyme family.

The catalysed reaction is 4-(trimethylamino)butanoate + ATP + CoA = 4-(trimethylamino)butanoyl-CoA + AMP + diphosphate. It catalyses the reaction crotonobetaine + ATP + CoA = crotonobetainyl-CoA + AMP + diphosphate. It carries out the reaction (R)-carnitine + ATP + CoA = (R)-carnitinyl-CoA + AMP + diphosphate. Its pathway is amine and polyamine metabolism; carnitine metabolism. Functionally, catalyzes the transfer of CoA to carnitine, generating the initial carnitinyl-CoA needed for the CaiB reaction cycle. Also has activity toward crotonobetaine and gamma-butyrobetaine. In Citrobacter koseri (strain ATCC BAA-895 / CDC 4225-83 / SGSC4696), this protein is Crotonobetaine/carnitine--CoA ligase.